We begin with the raw amino-acid sequence, 505 residues long: L-arabinose isomerase (505 aa).

Positions 308, 335, 352, and 453 each coordinate Mn(2+).

The protein belongs to the arabinose isomerase family. The cofactor is Mn(2+).

It carries out the reaction beta-L-arabinopyranose = L-ribulose. The protein operates within carbohydrate degradation; L-arabinose degradation via L-ribulose; D-xylulose 5-phosphate from L-arabinose (bacterial route): step 1/3. Its function is as follows. Catalyzes the conversion of L-arabinose to L-ribulose. In Bifidobacterium animalis subsp. lactis (strain AD011), this protein is L-arabinose isomerase.